Consider the following 62-residue polypeptide: Overexpressed in colon carcinoma 1 protein homolog (62 aa).

Residues 1 to 16 show a composition bias toward gly residues; it reads MGCGNSTAGGAGGRGA. Positions 1 to 62 are disordered; it reads MGCGNSTAGG…SGQTKAAPKD (62 aa).

This sequence belongs to the OCC1 family.

The polypeptide is Overexpressed in colon carcinoma 1 protein homolog (Gallus gallus (Chicken)).